Consider the following 223-residue polypeptide: Ribose-5-phosphate isomerase A (223 aa).

Substrate is bound by residues 26–29, 82–85, and 95–98; these read TGST, DGAD, and KGGG. Residue Glu-104 is the Proton acceptor of the active site. Lys-122 provides a ligand contact to substrate.

It belongs to the ribose 5-phosphate isomerase family. As to quaternary structure, homodimer.

It catalyses the reaction aldehydo-D-ribose 5-phosphate = D-ribulose 5-phosphate. It participates in carbohydrate degradation; pentose phosphate pathway; D-ribose 5-phosphate from D-ribulose 5-phosphate (non-oxidative stage): step 1/1. Its function is as follows. Catalyzes the reversible conversion of ribose-5-phosphate to ribulose 5-phosphate. The chain is Ribose-5-phosphate isomerase A from Streptococcus agalactiae serotype Ia (strain ATCC 27591 / A909 / CDC SS700).